Here is a 105-residue protein sequence, read N- to C-terminus: Iron-sulfur cluster assembly protein CyaY (105 aa).

Belongs to the frataxin family.

Involved in iron-sulfur (Fe-S) cluster assembly. May act as a regulator of Fe-S biogenesis. The chain is Iron-sulfur cluster assembly protein CyaY from Paraburkholderia phytofirmans (strain DSM 17436 / LMG 22146 / PsJN) (Burkholderia phytofirmans).